Consider the following 364-residue polypeptide: Aminomethyltransferase (364 aa).

Belongs to the GcvT family. The glycine cleavage system is composed of four proteins: P, T, L and H.

It catalyses the reaction N(6)-[(R)-S(8)-aminomethyldihydrolipoyl]-L-lysyl-[protein] + (6S)-5,6,7,8-tetrahydrofolate = N(6)-[(R)-dihydrolipoyl]-L-lysyl-[protein] + (6R)-5,10-methylene-5,6,7,8-tetrahydrofolate + NH4(+). In terms of biological role, the glycine cleavage system catalyzes the degradation of glycine. The protein is Aminomethyltransferase of Escherichia coli O81 (strain ED1a).